A 357-amino-acid chain; its full sequence is MAVCPHEWLLYCRPGFEKDLSAELADKTAHAGQGGYPIAARDSGHVRFVLDPETPANEVHRALPLEALVFARQSLVAFPPLEALPRDDRLSAIVDLVVASGWSFESIWQETPDTNEEKALAGLMKALRKPLESTLKKRGALRRKAGGRRLHLFWTAGDRVQLAMSFPGNRAEHLGGIPRLKFPREAPSRSTLKLEEAWHVFVPREAWPTRLSDSMQAADLGAAPGGWTYQLVRKGMYVYAIDNGPMDDALMASGQVEHLCEDGFVWQPPMRLDWLVCDIVDKPMRVIDMVERWLVAPWCHEAIFNLKLPMKKRWDEVSRCLERLASSLDQAGIRARIRCRHLYHDREEVTVHVCLLD.

S-adenosyl-L-methionine contacts are provided by residues S190, 223–226, D242, D262, and D278; that span reads APGG. K307 serves as the catalytic Proton acceptor.

The protein belongs to the class I-like SAM-binding methyltransferase superfamily. RNA methyltransferase RlmE family. RlmM subfamily. Monomer.

Its subcellular location is the cytoplasm. The enzyme catalyses cytidine(2498) in 23S rRNA + S-adenosyl-L-methionine = 2'-O-methylcytidine(2498) in 23S rRNA + S-adenosyl-L-homocysteine + H(+). Catalyzes the 2'-O-methylation at nucleotide C2498 in 23S rRNA. This Chromohalobacter salexigens (strain ATCC BAA-138 / DSM 3043 / CIP 106854 / NCIMB 13768 / 1H11) protein is Ribosomal RNA large subunit methyltransferase M.